The sequence spans 904 residues: Serine/arginine repetitive matrix protein 1 (904 aa).

Met-1 is modified (N-acetylmethionine). Residues 1 to 151 form a necessary for DNA and RNA-binding region; that stretch reads MDAGFFRGTS…ASMKKQDEDK (151 aa). The interval 1-156 is necessary for mRNA 3'-end cleavage and cytoplasmic accumulation; that stretch reads MDAGFFRGTS…QDEDKDKRDK (156 aa). A Citrulline modification is found at Arg-7. Positions 27-126 constitute a PWI domain; the sequence is QLKFAECLEK…AGIPSAFLEL (100 aa). Lys-127 is covalently cross-linked (Glycyl lysine isopeptide (Lys-Gly) (interchain with G-Cter in SUMO2)). A compositionally biased stretch (basic and acidic residues) spans 139–170; it reads EKLASMKKQDEDKDKRDKEEKESSREKRERSR. Residues 139-904 form a disordered region; it reads EKLASMKKQD…MRKAQVSPQS (766 aa). N6-acetyllysine is present on Lys-140. Over residues 171 to 207 the composition is skewed to basic residues; the sequence is SPRRRKSRSPSPRRRSSPVRRERKRSHSRSPRHRTKS. A compositionally biased stretch (basic and acidic residues) spans 214–234; the sequence is PEKKEKTPELPEPSVKVKEPS. Residue Thr-220 is modified to Phosphothreonine. Ser-227 carries the post-translational modification Phosphoserine. Residue Lys-231 forms a Glycyl lysine isopeptide (Lys-Gly) (interchain with G-Cter in SUMO1); alternate linkage. Lys-231 participates in a covalent cross-link: Glycyl lysine isopeptide (Lys-Gly) (interchain with G-Cter in SUMO2); alternate. Residues Ser-234 and Ser-240 each carry the phosphoserine modification. Thr-241 is modified (phosphothreonine). Residues 246–275 are compositionally biased toward basic and acidic residues; that stretch reads KVPKPEPIPEPKEPSPEKNSKKEKEKEKTR. A Glycyl lysine isopeptide (Lys-Gly) (interchain with G-Cter in SUMO2) cross-link involves residue Lys-249. Ser-260 carries the post-translational modification Phosphoserine. 2 stretches are compositionally biased toward basic residues: residues 276–329 and 336–351; these read PRSR…RTPP and PRHR…RRRS. Residues 300–688 are necessary for speckles and matrix localization; it reads RRHRSRSRSY…NKRHSPSPRP (389 aa). Residues 352–368 are compositionally biased toward low complexity; the sequence is SASLSGSSSSSSSSRSR. Ser-389, Ser-391, Ser-393, and Ser-402 each carry phosphoserine. Thr-406 carries the phosphothreonine modification. The residue at position 414 (Ser-414) is a Phosphoserine. Thr-416 is modified (phosphothreonine). Phosphoserine occurs at positions 420, 429, 431, and 436. Positions 428-438 are enriched in polar residues; that stretch reads VSVSPGRTSGK. Lys-447 is covalently cross-linked (Glycyl lysine isopeptide (Lys-Gly) (interchain with G-Cter in SUMO2)). Phosphoserine occurs at positions 450 and 452. Lys-459 participates in a covalent cross-link: Glycyl lysine isopeptide (Lys-Gly) (interchain with G-Cter in SUMO2). Residues Ser-463 and Ser-465 each carry the phosphoserine modification. A Glycyl lysine isopeptide (Lys-Gly) (interchain with G-Cter in SUMO2) cross-link involves residue Lys-472. Ser-478 carries the post-translational modification Phosphoserine. Low complexity predominate over residues 478-501; that stretch reads SVQQRRQYRRQNQQSSSDSGSSSS. Residues 503–518 show a composition bias toward basic and acidic residues; that stretch reads EDERPKRSHVKNGEVG. Phosphoserine occurs at positions 524, 526, 528, 530, 532, 549, and 551. A compositionally biased stretch (basic residues) spans 533-560; the sequence is PRKRQKETSPRGRRRRSPSPPPTRRRRS. Thr-555 is subject to Phosphothreonine. Residues Ser-560 and Ser-562 each carry the phosphoserine modification. The span at 567–592 shows a compositional bias: basic residues; sequence PRRRRTPTPPPRRRTPSPPPRRRSPS. Residues Thr-572, Thr-574, and Thr-581 each carry the phosphothreonine modification. Ser-583 carries the phosphoserine modification. The segment covering 593–605 has biased composition (low complexity); the sequence is PRRYSPPIQRRYS. Tyr-596 bears the Phosphotyrosine mark. Phosphoserine is present on residues Ser-597, Ser-605, and Ser-607. Thr-614 is subject to Phosphothreonine. Residues Ser-616, Ser-626, Ser-628, Ser-636, and Ser-638 each carry the phosphoserine modification. Basic residues predominate over residues 621–636; it reads PKRRASPSPPPKRRVS. Over residues 649-663 the composition is skewed to basic residues; that stretch reads TKRRSPSLSSKHRKG. A phosphoserine mark is found at Ser-694, Ser-695, Ser-696, Ser-705, Ser-707, Ser-713, and Ser-715. Composition is skewed to low complexity over residues 701-719 and 736-759; these read RRGA…PSTR and AASP…SPEP. A Phosphothreonine modification is found at Thr-718. 10 positions are modified to phosphoserine: Ser-738, Ser-740, Ser-748, Ser-752, Ser-754, Ser-756, Ser-769, Ser-773, Ser-775, and Ser-777. Positions 771-786 are enriched in low complexity; sequence VQSQSPSTNWSPAVPV. Phosphothreonine is present on Thr-778. A phosphoserine mark is found at Ser-781 and Ser-791. Residue Thr-793 is modified to Phosphothreonine. 3 positions are modified to phosphoserine: Ser-795, Ser-797, and Ser-802. Over residues 809–834 the composition is skewed to basic residues; the sequence is KKKKKKKDKKHKKDKKHKKHKKHKKE. Low complexity predominate over residues 837 to 866; sequence VAAAAAAAVTPAAIAAATTTLAQEEPVAAP. Lys-869 participates in a covalent cross-link: Glycyl lysine isopeptide (Lys-Gly) (interchain with G-Cter in SUMO2). Thr-872 bears the Phosphothreonine mark. Ser-874 is modified (phosphoserine). Residues 882–892 are compositionally biased toward basic and acidic residues; that stretch reads DLEKHLREKAL. Position 901 is a phosphoserine (Ser-901).

Belongs to the splicing factor SR family. As to quaternary structure, identified in the spliceosome C complex. Found in a pre-mRNA splicing complex with SFRS4, SFRS5, SNRP70, SNRPA1, SRRM1 and SRRM2. Found in a pre-mRNA exonic splicing enhancer (ESE) complex with SNRP70, SNRPA1, SRRM1 and TRA2B/SFRS10. Component of the minor spliceosome, which splices U12-type introns. Found in a mRNA splicing-dependent exon junction complex (EJC) with DEK, PRPF8, NCBP1, RBM8A, RNPS1, SRRM1 and ALYREF/THOC4. Interacts with DDX39B, CPSF1, RBM8A, RNPS1, and ALYREF/THOC4. Seems to be a compound of RNA export complexes that are released from speckles in a ATP-dependent manner. Post-translationally, phosphorylated on multiple serine and threonine residues by DYRK3 during the G2-to-M transition, after the nuclear-envelope breakdown. Phosphorylation by DYRK3 promotes disassembly of nuclear speckles. In terms of processing, citrullinated by PADI4.

It localises to the nucleus matrix. It is found in the nucleus speckle. In terms of biological role, part of pre- and post-splicing multiprotein mRNP complexes. As a component of the minor spliceosome, involved in the splicing of U12-type introns in pre-mRNAs. Involved in numerous pre-mRNA processing events. Promotes constitutive and exonic splicing enhancer (ESE)-dependent splicing activation by bridging together sequence-specific (SR family proteins, SFRS4, SFRS5 and TRA2B/SFRS10) and basal snRNP (SNRP70 and SNRPA1) factors of the spliceosome. Stimulates mRNA 3'-end cleavage independently of the formation of an exon junction complex. Binds both pre-mRNA and spliced mRNA 20-25 nt upstream of exon-exon junctions. Binds RNA and DNA with low sequence specificity and has similar preference for either double- or single-stranded nucleic acid substrates. The chain is Serine/arginine repetitive matrix protein 1 (SRRM1) from Homo sapiens (Human).